Reading from the N-terminus, the 60-residue chain is Large ribosomal subunit protein bL32 (60 aa).

It belongs to the bacterial ribosomal protein bL32 family.

This is Large ribosomal subunit protein bL32 from Ehrlichia ruminantium (strain Gardel).